Consider the following 156-residue polypeptide: Small ribosomal subunit protein uS7 (156 aa).

The protein belongs to the universal ribosomal protein uS7 family. Part of the 30S ribosomal subunit. Contacts proteins S9 and S11.

Functionally, one of the primary rRNA binding proteins, it binds directly to 16S rRNA where it nucleates assembly of the head domain of the 30S subunit. Is located at the subunit interface close to the decoding center, probably blocks exit of the E-site tRNA. The protein is Small ribosomal subunit protein uS7 of Cupriavidus metallidurans (strain ATCC 43123 / DSM 2839 / NBRC 102507 / CH34) (Ralstonia metallidurans).